A 1288-amino-acid chain; its full sequence is Disease resistance protein RRS1 (1288 aa).

Positions 5 to 146 (EKDEEFVCIS…EIVRDVYETH (142 aa)) constitute a TIR domain. An important for interaction with RPS4 region spans residues 25 to 26 (SH). In terms of domain architecture, NB-ARC spans 170–421 (IGIRCVGIWG…LLEGCGFFPH (252 aa)). An ATP-binding site is contributed by 179–186 (GMPGIGKT). 12 LRR repeats span residues 498 to 522 (SEEI…AFKN), 535 to 553 (NPEV…HSLP), 554 to 575 (NELR…NFDP), 577 to 598 (HLVE…TKNL), 621 to 646 (AENL…RLLR), 665 to 688 (PPNI…TVKP), 697 to 720 (LTEI…NSSC), 740 to 764 (LPNM…SIQG), 766 to 791 (PRFL…SLEI), 792 to 807 (LNAH…NMAN), 808 to 829 (LEFL…QGFP), and 830 to 852 (RNLK…PLSL). Positions 986-1003 (RKFHCWAPWQVVPKVRKD) match the Nuclear localization signal motif. The WRKY DNA-binding region spans 1202–1270 (IPAIDEGDLW…YLSEHNHPRP (69 aa)). The tract at residues 1267-1288 (HPRPTKRKALADSTRSTSSSIC) is disordered. Positions 1279–1288 (STRSTSSSIC) are enriched in polar residues.

This sequence belongs to the disease resistance TIR-NB-LRR family. In terms of assembly, interacts with PopP2, a R.solanacearum type III effector. Interacts with RPS4.

Its subcellular location is the nucleus. The protein localises to the cytoplasm. Transcription factor. Interacts specifically with the W box (5'-(T)TGAC[CT]-3'), a frequently occurring elicitor-responsive cis-acting element. Also acts as a disease resistance protein involved in resistance to fungal and bacterial pathogens, including R.solanacearum, P.syringae pv. tomato and C.higginsianum. Heterodimerization with RPS4 is required to form a functional complex to recognize AvrRps4 and PopP2. Contributes to temperature-conditioned RPS4 auto-immunity. The protein is Disease resistance protein RRS1 of Arabidopsis thaliana (Mouse-ear cress).